The sequence spans 445 residues: Tubulin beta-2 chain (445 aa).

An MREI motif motif is present at residues 1 to 4 (MREI). 8 residues coordinate GTP: Gln-11, Glu-69, Ser-138, Gly-142, Thr-143, Gly-144, Asn-204, and Asn-226. Glu-69 contributes to the Mg(2+) binding site. Positions 424–445 (QYQDATADEQGEFEEEGEEDEA) are disordered. Residues 429–445 (TADEQGEFEEEGEEDEA) are compositionally biased toward acidic residues. A 5-glutamyl polyglutamate modification is found at Glu-438.

The protein belongs to the tubulin family. As to quaternary structure, dimer of alpha and beta chains. A typical microtubule is a hollow water-filled tube with an outer diameter of 25 nm and an inner diameter of 15 nM. Alpha-beta heterodimers associate head-to-tail to form protofilaments running lengthwise along the microtubule wall with the beta-tubulin subunit facing the microtubule plus end conferring a structural polarity. Microtubules usually have 13 protofilaments but different protofilament numbers can be found in some organisms and specialized cells. The cofactor is Mg(2+). In terms of processing, some glutamate residues at the C-terminus are polyglycylated, resulting in polyglycine chains on the gamma-carboxyl group. Glycylation is mainly limited to tubulin incorporated into axonemes (cilia and flagella) whereas glutamylation is prevalent in neuronal cells, centrioles, axonemes, and the mitotic spindle. Both modifications can coexist on the same protein on adjacent residues, and lowering polyglycylation levels increases polyglutamylation, and reciprocally. The precise function of polyglycylation is still unclear. Some glutamate residues at the C-terminus are polyglutamylated, resulting in polyglutamate chains on the gamma-carboxyl group. Polyglutamylation plays a key role in microtubule severing by spastin (SPAST). SPAST preferentially recognizes and acts on microtubules decorated with short polyglutamate tails: severing activity by SPAST increases as the number of glutamates per tubulin rises from one to eight, but decreases beyond this glutamylation threshold. In terms of tissue distribution, highly expressed in neuronal cells.

It is found in the cytoplasm. The protein localises to the cytoskeleton. Tubulin is the major constituent of microtubules, a cylinder consisting of laterally associated linear protofilaments composed of alpha- and beta-tubulin heterodimers. Microtubules grow by the addition of GTP-tubulin dimers to the microtubule end, where a stabilizing cap forms. Below the cap, tubulin dimers are in GDP-bound state, owing to GTPase activity of alpha-tubulin. The sequence is that of Tubulin beta-2 chain from Gallus gallus (Chicken).